A 399-amino-acid chain; its full sequence is Bifunctional enzyme IspD/IspF (399 aa).

The tract at residues 1 to 235 (METWALILAA…MVEQPKTTVP (235 aa)) is 2-C-methyl-D-erythritol 4-phosphate cytidylyltransferase. Positions 236 to 399 (IVGYGYDVHK…IVIVTAIRIS (164 aa)) are 2-C-methyl-D-erythritol 2,4-cyclodiphosphate synthase. A divalent metal cation contacts are provided by Asp-242 and His-244. 4-CDP-2-C-methyl-D-erythritol 2-phosphate is bound by residues 242–244 (DVH) and 275–276 (HS). His-283 contacts a divalent metal cation. 4-CDP-2-C-methyl-D-erythritol 2-phosphate contacts are provided by residues 297-299 (DIG), 302-306 (FPDSD), 373-376 (TTEE), and Phe-380.

The protein in the N-terminal section; belongs to the IspD/TarI cytidylyltransferase family. IspD subfamily. This sequence in the C-terminal section; belongs to the IspF family. A divalent metal cation serves as cofactor.

The enzyme catalyses 2-C-methyl-D-erythritol 4-phosphate + CTP + H(+) = 4-CDP-2-C-methyl-D-erythritol + diphosphate. The catalysed reaction is 4-CDP-2-C-methyl-D-erythritol 2-phosphate = 2-C-methyl-D-erythritol 2,4-cyclic diphosphate + CMP. It participates in isoprenoid biosynthesis; isopentenyl diphosphate biosynthesis via DXP pathway; isopentenyl diphosphate from 1-deoxy-D-xylulose 5-phosphate: step 2/6. Its pathway is isoprenoid biosynthesis; isopentenyl diphosphate biosynthesis via DXP pathway; isopentenyl diphosphate from 1-deoxy-D-xylulose 5-phosphate: step 4/6. Its function is as follows. Bifunctional enzyme that catalyzes the formation of 4-diphosphocytidyl-2-C-methyl-D-erythritol from CTP and 2-C-methyl-D-erythritol 4-phosphate (MEP) (IspD), and catalyzes the conversion of 4-diphosphocytidyl-2-C-methyl-D-erythritol 2-phosphate (CDP-ME2P) to 2-C-methyl-D-erythritol 2,4-cyclodiphosphate (ME-CPP) with a corresponding release of cytidine 5-monophosphate (CMP) (IspF). The chain is Bifunctional enzyme IspD/IspF from Lawsonia intracellularis (strain PHE/MN1-00).